The primary structure comprises 343 residues: Methionine import ATP-binding protein MetN (343 aa).

Positions 2–241 (IKLSNITKVF…PKTPLAQKFI (240 aa)) constitute an ABC transporter domain. 38 to 45 (GASGAGKS) is a binding site for ATP.

This sequence belongs to the ABC transporter superfamily. Methionine importer (TC 3.A.1.24) family. As to quaternary structure, the complex is composed of two ATP-binding proteins (MetN), two transmembrane proteins (MetI) and a solute-binding protein (MetQ).

Its subcellular location is the cell inner membrane. The enzyme catalyses L-methionine(out) + ATP + H2O = L-methionine(in) + ADP + phosphate + H(+). It catalyses the reaction D-methionine(out) + ATP + H2O = D-methionine(in) + ADP + phosphate + H(+). Its function is as follows. Part of the ABC transporter complex MetNIQ involved in methionine import. Responsible for energy coupling to the transport system. The sequence is that of Methionine import ATP-binding protein MetN from Escherichia coli O157:H7.